The following is a 118-amino-acid chain: Small ribosomal subunit protein uS13 (118 aa).

Positions His91–Lys118 are disordered.

It belongs to the universal ribosomal protein uS13 family. In terms of assembly, part of the 30S ribosomal subunit. Forms a loose heterodimer with protein S19. Forms two bridges to the 50S subunit in the 70S ribosome.

Located at the top of the head of the 30S subunit, it contacts several helices of the 16S rRNA. In the 70S ribosome it contacts the 23S rRNA (bridge B1a) and protein L5 of the 50S subunit (bridge B1b), connecting the 2 subunits; these bridges are implicated in subunit movement. Contacts the tRNAs in the A and P-sites. This Methylococcus capsulatus (strain ATCC 33009 / NCIMB 11132 / Bath) protein is Small ribosomal subunit protein uS13.